Here is a 361-residue protein sequence, read N- to C-terminus: AP2/ERF and B3 domain-containing transcription repressor TEM1 (361 aa).

A disordered region spans residues 1–73 (MEYSCVDDSS…SRKLPSSKYK (73 aa)). The span at 9–27 (SSTTSESLSISTTPKPTTT) shows a compositional bias: low complexity. Positions 71–126 (KYKGVVPQPNGRWGAQIYEKHQRVWLGTFNEEEEAASSYDIAVRRFRGRDAVTNFK) form a DNA-binding region, AP2/ERF. The segment at residues 195-306 (FEKTVTPSDV…QLYIHWKVRS (112 aa)) is a DNA-binding region (TF-B3).

Belongs to the AP2/ERF transcription factor family. RAV subfamily. As to quaternary structure, interacts with FT. In terms of tissue distribution, expressed in leaves.

Its subcellular location is the nucleus. In terms of biological role, transcriptional repressor of flowering time on long day plants. Acts directly on FT expression by binding 5'-CAACA-3' and 5'-CACCTG-3 sequences. Functionally redundant with TEM2. This chain is AP2/ERF and B3 domain-containing transcription repressor TEM1 (TEM1), found in Arabidopsis thaliana (Mouse-ear cress).